A 187-amino-acid polypeptide reads, in one-letter code: Ribosome-recycling factor (187 aa).

This sequence belongs to the RRF family.

It is found in the cytoplasm. Its function is as follows. Responsible for the release of ribosomes from messenger RNA at the termination of protein biosynthesis. May increase the efficiency of translation by recycling ribosomes from one round of translation to another. This Flavobacterium psychrophilum (strain ATCC 49511 / DSM 21280 / CIP 103535 / JIP02/86) protein is Ribosome-recycling factor.